The primary structure comprises 99 residues: Cell division protein FtsB (99 aa).

Residues 1-3 (MKF) lie on the Cytoplasmic side of the membrane. Residues 4-21 (FVIALIVLLGLLQYRLWS) traverse the membrane as a helical segment. The Periplasmic portion of the chain corresponds to 22–99 (GDNSLPEYFV…GDRSVSSPSQ (78 aa)). Residues 31 to 73 (VLQKQIAAQQEGNAKLNERNQVLKEEIIDLKSGTEAIEERARN) are a coiled coil.

This sequence belongs to the FtsB family. Part of a complex composed of FtsB, FtsL and FtsQ.

The protein localises to the cell inner membrane. Its function is as follows. Essential cell division protein. May link together the upstream cell division proteins, which are predominantly cytoplasmic, with the downstream cell division proteins, which are predominantly periplasmic. The polypeptide is Cell division protein FtsB (Shewanella sp. (strain ANA-3)).